Here is a 206-residue protein sequence, read N- to C-terminus: Large ribosomal subunit protein bL9 (206 aa).

Positions 182-206 (FAENQQKALAKEMNDNDANSINEEA) are disordered. Positions 197–206 (NDANSINEEA) are enriched in polar residues.

This sequence belongs to the bacterial ribosomal protein bL9 family.

Binds to the 23S rRNA. This is Large ribosomal subunit protein bL9 from Bartonella henselae (strain ATCC 49882 / DSM 28221 / CCUG 30454 / Houston 1) (Rochalimaea henselae).